The sequence spans 261 residues: Ribosomal RNA small subunit methyltransferase J (261 aa).

S-adenosyl-L-methionine-binding positions include 111-112 (RD), 127-128 (ER), 163-164 (SS), and aspartate 181.

This sequence belongs to the methyltransferase superfamily. RsmJ family.

Its subcellular location is the cytoplasm. It carries out the reaction guanosine(1516) in 16S rRNA + S-adenosyl-L-methionine = N(2)-methylguanosine(1516) in 16S rRNA + S-adenosyl-L-homocysteine + H(+). Specifically methylates the guanosine in position 1516 of 16S rRNA. The polypeptide is Ribosomal RNA small subunit methyltransferase J (Shewanella sp. (strain MR-7)).